Here is a 444-residue protein sequence, read N- to C-terminus: N-succinylarginine dihydrolase (444 aa).

Substrate-binding positions include 19-28, Asn-110, and 137-138; these read AGLSFGNVAS and HR. Residue Glu-174 is part of the active site. A substrate-binding site is contributed by Arg-214. His-250 is an active-site residue. Residues Asp-252 and Asn-362 each coordinate substrate. The Nucleophile role is filled by Cys-368.

It belongs to the succinylarginine dihydrolase family. As to quaternary structure, homodimer.

It catalyses the reaction N(2)-succinyl-L-arginine + 2 H2O + 2 H(+) = N(2)-succinyl-L-ornithine + 2 NH4(+) + CO2. Its pathway is amino-acid degradation; L-arginine degradation via AST pathway; L-glutamate and succinate from L-arginine: step 2/5. Its function is as follows. Catalyzes the hydrolysis of N(2)-succinylarginine into N(2)-succinylornithine, ammonia and CO(2). The sequence is that of N-succinylarginine dihydrolase from Shewanella baltica (strain OS185).